A 545-amino-acid polypeptide reads, in one-letter code: E3 ubiquitin-protein ligase ipaH9.8 (545 aa).

The interval 1-242 (MLPINNNFSL…YHGPRIYFSM (242 aa)) is interaction with target proteins. LRR repeat units lie at residues 57 to 77 (NSDELRLDRLNLSSLPDNLPA), 78 to 99 (QITLLNVSYNQLTNLPELPVTL), 100 to 117 (KKLYSASNKLSELPVLPP), 118 to 139 (ALESLQVQHNELENLPALPDSL), 140 to 157 (LTMNISYNEIVSLPSLPQ), 158 to 179 (ALKNLRATRNFLTELPAFSEGN), 182 to 203 (VVREYFFDRNQISHIPESILNL), and 205 to 228 (NECSIHISDNPLSSHALQALQRLT). The interval 243–250 (SDGQQNTL) is linker. An E3 ubiquitin-protein ligase catalytic domain region spans residues 251-545 (HRPLADAVTA…SENGSQLHHS (295 aa)). One can recognise an NEL domain in the interval 253–545 (PLADAVTAWF…SENGSQLHHS (293 aa)). The Glycyl thioester intermediate role is filled by cysteine 337.

It belongs to the LRR-containing bacterial E3 ligase family. As to quaternary structure, also interacts with human and mouse U2AF1 (U2AF35). Post-translationally, ubiquitinated in the presence of host E1 ubiquitin-activating enzyme, E2 ubiquitin-conjugating enzyme and ubiquitin.

Its subcellular location is the secreted. It localises to the host cytoplasm. The protein resides in the host nucleus. It catalyses the reaction S-ubiquitinyl-[E2 ubiquitin-conjugating enzyme]-L-cysteine + [acceptor protein]-L-lysine = [E2 ubiquitin-conjugating enzyme]-L-cysteine + N(6)-ubiquitinyl-[acceptor protein]-L-lysine.. Its activity is regulated as follows. Exists in an autoinhibited state in the absence of substrate protein, due to interactions of the leucine-rich repeats with NEL domain. Is activated upon binding to a substrate protein. In terms of biological role, effector E3 ubiquitin ligase that interferes with host's ubiquitination pathway and modulates the acute inflammatory responses, thus facilitating bacterial colonization within the host cell. Interacts with IKBKG (NEMO) and TNIP1 (ABIN-1), a ubiquitin-binding adapter protein, which results in TNIP1-dependent 'Lys-27'-linked polyubiquitination of IKBKG. Consequently, polyubiquitinated IKBKG undergoes proteasome-dependent degradation, which perturbs NF-kappa-B activation during bacterial infection. Mediates polyubiquitination of host U2AF1, leading to its proteasomal degradation. Catalyzes 'Lys-48'-linked polyubiquitination and subsequent degradation of a subset of host guanylate-binding proteins (GBP1, GBP2, GBP4 and GBP6), thereby suppressing host cell defense. In contrast, host GBP3 and GBP7 are not ubiquitinated by IpaH9.8. Uses UBE2D2 (UBCH5B) as an E2 ubiquitin-conjugating enzyme. The sequence is that of E3 ubiquitin-protein ligase ipaH9.8 (ipaH9.8) from Shigella sonnei (strain Ss046).